We begin with the raw amino-acid sequence, 369 residues long: Putative esterase slr0264 (369 aa).

Active-site charge relay system residues include Ser-162, Asp-303, and His-334.

It belongs to the AB hydrolase superfamily. AB hydrolase 4 family.

This is Putative esterase slr0264 from Synechocystis sp. (strain ATCC 27184 / PCC 6803 / Kazusa).